Here is a 212-residue protein sequence, read N- to C-terminus: Cytidylate kinase (212 aa).

7 to 15 (GPAASGKGT) contacts ATP.

This sequence belongs to the cytidylate kinase family. Type 1 subfamily.

The protein resides in the cytoplasm. It carries out the reaction CMP + ATP = CDP + ADP. The catalysed reaction is dCMP + ATP = dCDP + ADP. The protein is Cytidylate kinase of Bradyrhizobium diazoefficiens (strain JCM 10833 / BCRC 13528 / IAM 13628 / NBRC 14792 / USDA 110).